Here is a 340-residue protein sequence, read N- to C-terminus: Methionine import ATP-binding protein MetN 2 (340 aa).

One can recognise an ABC transporter domain in the interval 2–241; the sequence is ITLQNVVKEY…PQEKVTQRFV (240 aa). ATP is bound at residue 38–45; that stretch reads GYSGAGKS.

This sequence belongs to the ABC transporter superfamily. Methionine importer (TC 3.A.1.24) family. In terms of assembly, the complex is composed of two ATP-binding proteins (MetN), two transmembrane proteins (MetI) and a solute-binding protein (MetQ).

It localises to the cell membrane. It catalyses the reaction L-methionine(out) + ATP + H2O = L-methionine(in) + ADP + phosphate + H(+). The enzyme catalyses D-methionine(out) + ATP + H2O = D-methionine(in) + ADP + phosphate + H(+). In terms of biological role, part of the ABC transporter complex MetNIQ involved in methionine import. Responsible for energy coupling to the transport system. The sequence is that of Methionine import ATP-binding protein MetN 2 from Listeria monocytogenes serotype 4b (strain F2365).